The chain runs to 612 residues: Threonine--tRNA ligase (612 aa).

The catalytic stretch occupies residues 218 to 509; sequence DHRKLGVELG…LSEHFGGNFP (292 aa). Residues Cys-310, His-361, and His-486 each contribute to the Zn(2+) site.

It belongs to the class-II aminoacyl-tRNA synthetase family. As to quaternary structure, homodimer. Zn(2+) is required as a cofactor.

It is found in the cytoplasm. The enzyme catalyses tRNA(Thr) + L-threonine + ATP = L-threonyl-tRNA(Thr) + AMP + diphosphate + H(+). Catalyzes the attachment of threonine to tRNA(Thr) in a two-step reaction: L-threonine is first activated by ATP to form Thr-AMP and then transferred to the acceptor end of tRNA(Thr). Also edits incorrectly charged L-seryl-tRNA(Thr). The chain is Threonine--tRNA ligase from Helicobacter pylori (strain HPAG1).